The sequence spans 378 residues: Mitogen-activated protein kinase mpkC (378 aa).

The 281-residue stretch at 20-300 (YVNPQPIGMG…AQDALRHPYL (281 aa)) folds into the Protein kinase domain. ATP-binding positions include 26–34 (IGMGSFGLV) and lysine 49. The Proton acceptor role is filled by aspartate 141.

It belongs to the protein kinase superfamily. Ser/Thr protein kinase family. MAP kinase subfamily. Mg(2+) is required as a cofactor.

It localises to the nucleus. It catalyses the reaction L-seryl-[protein] + ATP = O-phospho-L-seryl-[protein] + ADP + H(+). The enzyme catalyses L-threonyl-[protein] + ATP = O-phospho-L-threonyl-[protein] + ADP + H(+). Its activity is regulated as follows. Activated by threonine and tyrosine phosphorylation. Mitogen-activated protein kinase (MAPK), part of the high-osmolarity glycerol (HOG) pathway. With sakA, plays a role in the osmotic and oxidative stress responses. Involved in paradoxical growth, the cell wall integrity (CWI) pathway and biofilm formation. SakA and mpkC collaborate during virulence and mpkC could act by modulating sakA activity upon exposure to several types of stresses and during cell wall biosynthesis. The polypeptide is Mitogen-activated protein kinase mpkC (Aspergillus fumigatus (strain CBS 144.89 / FGSC A1163 / CEA10) (Neosartorya fumigata)).